The primary structure comprises 507 residues: MGFSVFTPTRSLDGVSGFFQGAFLLSLFLVLFKAVQFYLRRQWLLKALEKFPSTPSHWLWGHDLKDREFQQVLTWVEKFPGACLQWLSGSKTRVLLYDPDYVKVVLGRSDPKASGIYQFLAPWIGYGLLLLNGKKWFQHRRMLTPAFHYGILKPYVKIMADSVNIMLDKWEKLDDQDHPLEIFHYVSLMTLDTVMKCAFSHQGSVQLDVNSRSYTKAVEDLNNLTFFRVRSAFYGNSIIYNMSSDGRLSRRACQIAHEHTDGVIKMRKAQLQNEEELQKARKKRHLDFLDILLFAKMEDGKSLSDEDLRAEVDTFMFEGHDTTASGISWVFYALATHPEHQERCREEVQSILGDGTSVTWDHLDQIPYTTMCIKEALRLYPPVPSVSRELSSPVTFPDGRSIPKGITTTILIYGLHHNPSYWPNPKVFDPSRFSPDSPRHSHAYLPFSGGARNCIGKQFAMNELKVAVALTLLRFELLPDPTRIPVPMARLVLKSKNGIHLRLKKLR.

The propeptide at 1 to 4 (MGFS) is removed in mature form. Position 318 (Glu318) interacts with heme. Ser437 bears the Phosphoserine mark. Cys454 provides a ligand contact to heme.

It belongs to the cytochrome P450 family. It depends on heme as a cofactor.

Its subcellular location is the endoplasmic reticulum membrane. The protein localises to the microsome membrane. The catalysed reaction is an omega-methyl-long-chain fatty acid + reduced [NADPH--hemoprotein reductase] + O2 = an omega-hydroxy-long-chain fatty acid + oxidized [NADPH--hemoprotein reductase] + H2O + H(+). It carries out the reaction dodecanoate + reduced [NADPH--hemoprotein reductase] + O2 = (11R)-hydroxydodecanoate + oxidized [NADPH--hemoprotein reductase] + H2O + H(+). The enzyme catalyses dodecanoate + reduced [NADPH--hemoprotein reductase] + O2 = 12-hydroxydodecanoate + oxidized [NADPH--hemoprotein reductase] + H2O + H(+). It catalyses the reaction tetradecanoate + reduced [NADPH--hemoprotein reductase] + O2 = 14-hydroxytetradecanoate + oxidized [NADPH--hemoprotein reductase] + H2O + H(+). Its pathway is lipid metabolism; fatty acid metabolism. In terms of biological role, a cytochrome P450 monooxygenase that catalyzes omega and omega-1 hydroxylation of saturated fatty acids. Exhibits preferential omega versus omega-1 regioselectivity and (R) versus (S) stereoselectivity for hydroxylation of dodecanoic (lauric) acid. Mechanistically, uses molecular oxygen inserting one oxygen atom into a substrate, and reducing the second into a water molecule, with two electrons provided by NADPH via cytochrome P450 reductase (CPR; NADPH-ferrihemoprotein reductase). The sequence is that of Cytochrome P450 4A14 from Rattus norvegicus (Rat).